Consider the following 119-residue polypeptide: Aspartate 1-decarboxylase (119 aa).

Catalysis depends on serine 25, which acts as the Schiff-base intermediate with substrate; via pyruvic acid. Serine 25 carries the pyruvic acid (Ser) modification. Substrate is bound at residue threonine 57. The Proton donor role is filled by tyrosine 58. Position 73–75 (73–75) interacts with substrate; the sequence is GAA.

Belongs to the PanD family. In terms of assembly, heterooctamer of four alpha and four beta subunits. The cofactor is pyruvate. Post-translationally, is synthesized initially as an inactive proenzyme, which is activated by self-cleavage at a specific serine bond to produce a beta-subunit with a hydroxyl group at its C-terminus and an alpha-subunit with a pyruvoyl group at its N-terminus.

It localises to the cytoplasm. The catalysed reaction is L-aspartate + H(+) = beta-alanine + CO2. It participates in cofactor biosynthesis; (R)-pantothenate biosynthesis; beta-alanine from L-aspartate: step 1/1. Functionally, catalyzes the pyruvoyl-dependent decarboxylation of aspartate to produce beta-alanine. The chain is Aspartate 1-decarboxylase from Desulfotalea psychrophila (strain LSv54 / DSM 12343).